The sequence spans 651 residues: Acetyl-coenzyme A synthetase (651 aa).

CoA contacts are provided by residues 189-192 (RGGK), T311, and N335. Residues 387-389 (GEP), 411-416 (DTWWQT), D500, and R515 each bind ATP. Residue S523 participates in CoA binding. R526 serves as a coordination point for ATP. Mg(2+) contacts are provided by V537, H539, and V542. A CoA-binding site is contributed by R584. The residue at position 609 (K609) is an N6-acetyllysine.

This sequence belongs to the ATP-dependent AMP-binding enzyme family. The cofactor is Mg(2+). Post-translationally, acetylated. Deacetylation by the SIR2-homolog deacetylase activates the enzyme.

The catalysed reaction is acetate + ATP + CoA = acetyl-CoA + AMP + diphosphate. Catalyzes the conversion of acetate into acetyl-CoA (AcCoA), an essential intermediate at the junction of anabolic and catabolic pathways. AcsA undergoes a two-step reaction. In the first half reaction, AcsA combines acetate with ATP to form acetyl-adenylate (AcAMP) intermediate. In the second half reaction, it can then transfer the acetyl group from AcAMP to the sulfhydryl group of CoA, forming the product AcCoA. The polypeptide is Acetyl-coenzyme A synthetase (Rhizobium leguminosarum bv. trifolii (strain WSM2304)).